Reading from the N-terminus, the 184-residue chain is Large ribosomal subunit protein uL15 (184 aa).

A disordered region spans residues 1-62 (MDLSSLRPAK…QMPMYRRLPK (62 aa)). Over residues 21-35 (RGPGSGNGTTAGKGN) the composition is skewed to gly residues.

The protein belongs to the universal ribosomal protein uL15 family. Part of the 50S ribosomal subunit.

Functionally, binds to the 23S rRNA. In Chlorobaculum parvum (strain DSM 263 / NCIMB 8327) (Chlorobium vibrioforme subsp. thiosulfatophilum), this protein is Large ribosomal subunit protein uL15.